A 226-amino-acid polypeptide reads, in one-letter code: MKTNLVVLITFTILISLGFWQLSRLKEKKLFLASMQANLTSPAINLAEIQDSLPYHKVKITGQFLPNKDIYLYGRRSMSSGKDGYYLVTPFKTIEDKVILVARGWFSNRNKIIITQATNDRQHEIIGVTMPSEKTRSYLPANDIKNNVWLTLDLKEASQTLELNLEDFYIIAEGKDISNLDILLPLSINHLAAIRNDHLEYALTWFGLAISLIVIYVIYRRNVISV.

2 consecutive transmembrane segments (helical) span residues 3-23 and 199-219; these read TNLV…WQLS and LEYA…YVIY.

The protein belongs to the SURF1 family.

Its subcellular location is the cell membrane. The polypeptide is SURF1-like protein (Rickettsia felis (strain ATCC VR-1525 / URRWXCal2) (Rickettsia azadi)).